We begin with the raw amino-acid sequence, 322 residues long: tRNA-dihydrouridine(16) synthase (322 aa).

FMN is bound by residues 7–9 and glutamine 68; that span reads PME. The active-site Proton donor is the cysteine 98. Residues lysine 139, 200 to 202, and 224 to 225 contribute to the FMN site; these read NGE and CR.

Belongs to the Dus family. DusC subfamily. FMN is required as a cofactor.

It carries out the reaction 5,6-dihydrouridine(16) in tRNA + NADP(+) = uridine(16) in tRNA + NADPH + H(+). The catalysed reaction is 5,6-dihydrouridine(16) in tRNA + NAD(+) = uridine(16) in tRNA + NADH + H(+). Its function is as follows. Catalyzes the synthesis of 5,6-dihydrouridine (D), a modified base found in the D-loop of most tRNAs, via the reduction of the C5-C6 double bond in target uridines. Specifically modifies U16 in tRNAs. In Vibrio parahaemolyticus serotype O3:K6 (strain RIMD 2210633), this protein is tRNA-dihydrouridine(16) synthase.